We begin with the raw amino-acid sequence, 224 residues long: Phosphoglycolate phosphatase (224 aa).

The active-site Nucleophile is aspartate 8. Mg(2+) is bound by residues aspartate 8, aspartate 10, glycine 11, and glycine 43. Lysine 151 lines the substrate pocket. The Mg(2+) site is built by aspartate 174, serine 175, and aspartate 178.

The protein belongs to the HAD-like hydrolase superfamily. Archaeal SPP-like hydrolase family. Homodimer. The cofactor is Mg(2+).

It carries out the reaction 2-phosphoglycolate + H2O = glycolate + phosphate. Its activity is regulated as follows. Inhibited by Ca(2+) ions and by high chloride ion concentration. By contrast, low chloride concentration (up to 50 mM) slightly activate the enzyme. In terms of biological role, catalyzes the dephosphorylation of 2-phosphoglycolate. Also has significant, but less efficient, pyrophosphatase activity, since it is able to catalyze the release of phosphate from inorganic pyrophosphate (PPi). The protein is Phosphoglycolate phosphatase of Thermoplasma acidophilum (strain ATCC 25905 / DSM 1728 / JCM 9062 / NBRC 15155 / AMRC-C165).